A 475-amino-acid polypeptide reads, in one-letter code: Glutamate--tRNA ligase 2 (475 aa).

Positions 11–21 (PSPTGFLHIGG) match the 'HIGH' region motif. Basic and acidic residues predominate over residues 116–133 (AEGRPPRYDGTWRDKDPA). Residues 116–137 (AEGRPPRYDGTWRDKDPAEAPS) are disordered. Positions 240-244 (KLSKR) match the 'KMSKS' region motif. Lys243 is a binding site for ATP.

Belongs to the class-I aminoacyl-tRNA synthetase family. Glutamate--tRNA ligase type 1 subfamily. As to quaternary structure, monomer.

Its subcellular location is the cytoplasm. It carries out the reaction tRNA(Glu) + L-glutamate + ATP = L-glutamyl-tRNA(Glu) + AMP + diphosphate. Catalyzes the attachment of glutamate to tRNA(Glu) in a two-step reaction: glutamate is first activated by ATP to form Glu-AMP and then transferred to the acceptor end of tRNA(Glu). The sequence is that of Glutamate--tRNA ligase 2 from Chelativorans sp. (strain BNC1).